Here is a 197-residue protein sequence, read N- to C-terminus: Recombination protein RecR (197 aa).

The C4-type zinc finger occupies 56–71 (CNVCFHFSADPICEIC). The Toprim domain occupies 79–173 (QTICVVADSR…KVTRIAFGLP (95 aa)).

This sequence belongs to the RecR family.

Functionally, may play a role in DNA repair. It seems to be involved in an RecBC-independent recombinational process of DNA repair. It may act with RecF and RecO. The protein is Recombination protein RecR of Rippkaea orientalis (strain PCC 8801 / RF-1) (Cyanothece sp. (strain PCC 8801)).